A 392-amino-acid chain; its full sequence is MDYCLQVAWIAGTKAITEQSNFMFSPLGLRAGLALLATGTDGETLRQLLAFLGSQHIHQLNAASAGLLAEMRAWPQLSFAAGIFVDRSLRLRPEFQSTAAAAHGAFPRSVDFQNQANAAAAEVNRFISQATNGRLNNTISPGTFGSSTKCVLANAMHFKATWGRKFESYDTQRRRFHRQDGTRVTVPFLSDPRTHYAARFDGLGFKVLQLFYKMVGHDGQVHFGAPCFCMLVFLPIKRDGLRHLLRMAVTEPDFVMRCVPRSEQEVSPCMVPKFKFSSELDARGALAKLGLGAPFDPLAADLSRMAVSVNTPPERLYVSAMRQKCAVEVDEEGTTAVEATYSCCSPTYSGPESPKPRPMSFVAEHPFMFAIVEYEKAQVLFLGHVMDPSNEE.

An RCL region spans residues 333 to 357 (GTTAVEATYSCCSPTYSGPESPKPR).

Belongs to the serpin family.

The chain is Putative non-inhibitory serpin-10 from Oryza sativa subsp. japonica (Rice).